The chain runs to 23 residues: M-myrmeciitoxin-Mp2b (23 aa).

The residue at position 23 (glutamine 23) is a Glutamine amide.

The protein belongs to the formicidae venom precursor-01 superfamily. Ant pilosulin family. Heterodimer with M-MIITX-Mp2a (pilosulin-3a) (AC Q26464); disulfide-linked. Only heterodimers (and not monomers) have been identified in the venom. In terms of tissue distribution, expressed by the venom gland.

It is found in the secreted. In terms of biological role, heterodimer protein that may serve both defensive (pain-inducing) and predatory (insecticidal) roles. Has membrane-disrupting activity and shows induction of non-specific calcium influx into cells,. Shows broad-spectrum activity against a diverse range of bacteria, and cell lines, as well as hemolytic activity (EC(50)=2.18 uM). In vivo, shows moderate insecticidal activity against D.melanogaster and potent anthelmintic activity against the veterinary nematode H.contortus. In addition, intraplantar injection into mice induces nocifensive behavior and mechanical allodynia. This chain is M-myrmeciitoxin-Mp2b, found in Myrmecia pilosula (Jack jumper ant).